The sequence spans 411 residues: Mitotic apparatus protein p62 (411 aa).

Composition is skewed to acidic residues over residues 134-156 (AYEV…EEEE), 183-201 (ELDE…EEEI), and 246-321 (DDDE…EEDS). The tract at residues 134 to 378 (AYEVGDEDLE…KSPSKPKKEE (245 aa)) is disordered. Positions 351-367 (GMKEKKTYSLEDMKQDL) are enriched in basic and acidic residues.

The protein belongs to the nucleoplasmin family. Phosphorylated by CaM-kinase II in vitro.

The protein localises to the nucleus. Its function is as follows. Required for mitotic progression. Binds to chromatin. This Lytechinus pictus (Painted sea urchin) protein is Mitotic apparatus protein p62.